Reading from the N-terminus, the 559-residue chain is Branched-chain-amino-acid aminotransferase-like protein 2 (559 aa).

Belongs to the class-IV pyridoxal-phosphate-dependent aminotransferase family.

The polypeptide is Branched-chain-amino-acid aminotransferase-like protein 2 (Arabidopsis thaliana (Mouse-ear cress)).